A 2377-amino-acid chain; its full sequence is MTTALTFGGGLFKDNTKFDIDMRGTADGAVNGGNIPNSQSQKRKRASPSPEIESEEDGDDWYEIDYIADSRVIRRKGRQILQYLIHWAGYAVHERTWEDEDGIGGEDCALVQEFYRKNPGKPRLSPSSVRKEVKLARMVEVVITTRRIDGKSRAASSTDQPSPHRLGITSPQANNIGGEDPNPSLTRRPVRSTVSEIAKRPTSKKVHPNKKCKASSDDESDFVFEEGEWDEDEDDDNDVDFRSSEDDEDDEQERSAEEPESDEEIIKPAKKTKSSLPKAKLRPKPANLGGFVTGVRPLNQGLDIKAAVRNMSDDLPPISDIEAMFDHLVSRIPDIVELVRQLNGRKLRVATMCSGTESPLLALNMIAKAIKAQHGLTLAFEHVFSCEIEPFKQAYIERNFTPPILFRDVTELGKKRAHTAYGSMVDVPGDVDILIAGTSCVDYSNLNNVQQDIDANGESGRTFRGMLQWVKKHQPPIVILENVCNAPWDKVVEYFGQIDYDAQYTRLDTKEFYIPHTRTRVYLFATPSSSESDDLPEKWAQTVKDLRRPWSSPFEAFLLHTDDPNIHRARLELASARAQTDGTSRKTTDWNRCESRHQRARQDEALGLLRPLTSWQEAGVCKGLDWTWNDWLLAQTERVVDLLEISTLRMAKDGIDSGFKACIWNVSQNVDRQTGSSKTALAPCLTPNMIPWVTIRGGPVTGREALALQGIPVRELLLTSENEDQLADLAGNAMTTTVVGSAMIAALKVACHKITEGANPEKEAALILEKEAVDDEQVANRIIGEDYLEHHDLDLAKVTKSNLSEILDLACRSSRHCQCEGQSGTAPNILECQECSYRACKSCGGRPEHVYAPCANQRVEPAEFEKRFKGLLPMRVRIAGLTDQCLNAVRKAAEKSNKGSVNDNDWQLWSTALLEGIHDAEFRFRYLKRQSTWTAVYEARRAMLSLVLRNQIPEWRLTIKAPASEPNNSQLRALLLHPVARLQIDIAGQDVLCGPWELCIPSMKTIDIEITGKGELLPSWQASLGLQGPFANTTRWSEVEISLQAEDENTLDRKLSGTYQLLPRCGQAMSSLHKKRPDLSDDGLPQLYFFLDPTRCGESREDRYVFSTSTERLDYGTERPVIARLDSHWREGNEKQRKVKLDVSGAWVKCPEAHLTAIGGDDIAVVANDAAANEIHRDRATFAIPSSASAISASLTTEGCSHAMALLSCRVPLDPTHSESMWRRGAWAEIDLSHQGNTTFANLAWITERLPPLDGLKNWAHIADDVSEHVCERCAPRPPKIHWIKREGKANKKGNKTKSTIIAFEDKLEAGQYEHALKHRPSPFVVQLRLDQDIGSFRIGLNIVSLAHRALSRLPPTTSEHKISLSWRLTPGHVTESPQPRRVFILPSNKQDPENSQPEAFKLPLRKEQLRSLWWMLEQEKATGKTHTFVEEEISESLLPAVGWRAEGKAERPVMVRGGVIADQVGYGKTVISIALVAQTLSLPAPEPATPGLIDLKATLIVVPGHLSKQWPNEIARFTGSMFKVIVIQGMKDLQEKTIAELGKADIIVMASEIFESDVYWSRLEYLSAQPREWLHDTQGGRFFCDRLDAAMESLVSQTKILKEKGSEAAMRAMEDKKKSLVDNVGSKKEVHTAVNFGKRMKGQAYRDKHDSDSKAKPITKEELERWEASEDEDDDENSKTYIPIPKFHSFTGSESIFSASVKKDYKLLPNPVLHMFRFRRVIADEFTYLQKKSLAAVLRLSSSYRWILSGTPPVSDFAAIRSIATFMGIHLGVEDDGEGDVQYQKARAKDQTQAEKFHAFREVHSRAWHNRRDELAQEFLNVFVRQNIAEIEDIPTVEHIHTFKLPASEGAVYLELEHHLQALEMQARKETKFKNVSQGDRNARLEEALSDSKTAEEALLKRCCHFTLDLSDKTQDAKSAQEACDHITSARARQLLACQEDLSRSVNQAIALHGWIKKKGGFSKNDDERQPFAEWIAFSSNISKHQGDIEAARILLKVIEKCGVKDGNIPPSPSDKQSPSIASGAKMDDVKWQLREQTHLLRKLVKELVARVRSLRFFEVVRKIQKGKSDAQIVLESSECGHKPSTNPDIEMAILSCCGHVACHKCMRKAAASQRCVKSGECQAAVRPTNIVKVSSLGVEGELSSGRYGAKLEHLVNLIHSIPKNERVLVFLQWEDLAGKVSEALSAGRIPHVTLSGSAKSRANTLDRFQSTNADSARVLLLKMNDASAAGSNLTTANHAVFLGPLFTNSLFNYRAVETQAIGRVRRYGQQKKVHIHRLLALDTIDMTIFNARRTELKEKTDWEEIPQEEYKGRGSSISMTNEKRTPTLTVKSNPFKRSSSWALASSFRSKKRSMEARDAEGVSDDDENSELSDII.

Residues 24 to 56 are disordered; it reads GTADGAVNGGNIPNSQSQKRKRASPSPEIESEE. In terms of domain architecture, Chromo; shadow subtype spans 62-126; it reads YEIDYIADSR…KNPGKPRLSP (65 aa). The tract at residues 150 to 282 is disordered; it reads GKSRAASSTD…KSSLPKAKLR (133 aa). Over residues 201–213 the composition is skewed to basic residues; the sequence is PTSKKVHPNKKCK. Composition is skewed to acidic residues over residues 217–238 and 245–263; these read DDESDFVFEEGEWDEDEDDDND and EDDEDDEQERSAEEPESDE. The segment covering 268–282 has biased composition (basic residues); sequence PAKKTKSSLPKAKLR. An SAM-dependent MTase C5-type domain is found at 347 to 753; the sequence is LRVATMCSGT…IAALKVACHK (407 aa). The active site involves Cys440. The Helicase ATP-binding domain occupies 1450 to 1771; the sequence is AERPVMVRGG…RSIATFMGIH (322 aa). Residue 1463–1470 coordinates ATP; sequence DQVGYGKT. Disordered regions lie at residues 1642–1680, 2313–2334, and 2347–2377; these read KGQAYRDKHDSDSKAKPITKEELERWEASEDEDDDENSK, KGRGSSISMTNEKRTPTLTVKS, and SSFRSKKRSMEARDAEGVSDDDENSELSDII. The segment covering 1645–1669 has biased composition (basic and acidic residues); the sequence is AYRDKHDSDSKAKPITKEELERWEA. In terms of domain architecture, Helicase C-terminal spans 2152–2315; sequence KLEHLVNLIH…EIPQEEYKGR (164 aa). Residues 2317–2334 are compositionally biased toward polar residues; that stretch reads SSISMTNEKRTPTLTVKS. Over residues 2363–2377 the composition is skewed to acidic residues; sequence GVSDDDENSELSDII.

This sequence in the N-terminal section; belongs to the class I-like SAM-binding methyltransferase superfamily. C5-methyltransferase family. In the C-terminal section; belongs to the SNF2/RAD54 helicase family. Interacts with SWI6. Mg(2+) is required as a cofactor.

Its subcellular location is the nucleus. The protein resides in the chromosome. The enzyme catalyses a 2'-deoxycytidine in DNA + S-adenosyl-L-methionine + ATP + H2O = a 5-methyl-2'-deoxycytidine in DNA + S-adenosyl-L-homocysteine + ADP + phosphate + 2 H(+). Hemimethylated DNA substrates stimulate ATP hydrolysis and this is a prerequisite for methyltransferase activity. In terms of biological role, ATP-dependent cytosine methylase that maintains DNA methylation by acting at hemimethylated palindromic 5'-CG-3' sites to produce symmetrically methylated DNA strands. DNA methylation may play a role in transcriptional silencing, particularly at transposable elements. This Cryptococcus neoformans var. grubii serotype A (strain H99 / ATCC 208821 / CBS 10515 / FGSC 9487) (Filobasidiella neoformans var. grubii) protein is DNA (cytosine-5-)-methyltransferase DMT5.